The sequence spans 90 residues: Guanine nucleotide-binding protein subunit gamma (90 aa).

A lipid anchor (S-palmitoyl cysteine) is attached at Cys86. Cys87 is modified (cysteine methyl ester). Residue Cys87 is the site of S-farnesyl cysteine attachment. Positions 88–90 (CIM) are cleaved as a propeptide — removed in mature form.

Belongs to the G protein gamma family. As to quaternary structure, g proteins are composed of 3 units, alpha, beta and gamma.

It localises to the membrane. The protein is Guanine nucleotide-binding protein subunit gamma of Eremothecium gossypii (strain ATCC 10895 / CBS 109.51 / FGSC 9923 / NRRL Y-1056) (Yeast).